Reading from the N-terminus, the 190-residue chain is Xanthine phosphoribosyltransferase (190 aa).

Xanthine-binding residues include leucine 20 and asparagine 27. 129–133 is a 5-phospho-alpha-D-ribose 1-diphosphate binding site; sequence ASGSA. Lysine 157 serves as a coordination point for xanthine.

The protein belongs to the purine/pyrimidine phosphoribosyltransferase family. Xpt subfamily. Homodimer.

It localises to the cytoplasm. It carries out the reaction XMP + diphosphate = xanthine + 5-phospho-alpha-D-ribose 1-diphosphate. It functions in the pathway purine metabolism; XMP biosynthesis via salvage pathway; XMP from xanthine: step 1/1. Functionally, converts the preformed base xanthine, a product of nucleic acid breakdown, to xanthosine 5'-monophosphate (XMP), so it can be reused for RNA or DNA synthesis. The chain is Xanthine phosphoribosyltransferase from Clostridium tetani (strain Massachusetts / E88).